We begin with the raw amino-acid sequence, 413 residues long: ORC1-type DNA replication protein 10 (413 aa).

ATP is bound by residues 63–67 (VGKTA), Y211, and R223.

This sequence belongs to the CDC6/cdc18 family.

Involved in regulation of DNA replication. The chain is ORC1-type DNA replication protein 10 (orc10) from Halobacterium salinarum (strain ATCC 700922 / JCM 11081 / NRC-1) (Halobacterium halobium).